The sequence spans 118 residues: Small ribosomal subunit protein uS13 (118 aa).

The segment at 94-118 (SLPLRGQRTKTNARTRKGPRKPIKR) is disordered.

The protein belongs to the universal ribosomal protein uS13 family. Part of the 30S ribosomal subunit. Forms a loose heterodimer with protein S19. Forms two bridges to the 50S subunit in the 70S ribosome.

Located at the top of the head of the 30S subunit, it contacts several helices of the 16S rRNA. In the 70S ribosome it contacts the 23S rRNA (bridge B1a) and protein L5 of the 50S subunit (bridge B1b), connecting the 2 subunits; these bridges are implicated in subunit movement. Contacts the tRNAs in the A and P-sites. The polypeptide is Small ribosomal subunit protein uS13 (Photobacterium profundum (strain SS9)).